The sequence spans 307 residues: Auxiliary protein GraX (307 aa).

Homodimer. Interacts with GraR and GraS.

Its function is as follows. Plays a role in resistance against cationic antimicrobial peptides (CAMPs). Facilitates the activation of GraS to transduce the signal to GraR. The sequence is that of Auxiliary protein GraX (graX) from Staphylococcus aureus (strain NCTC 8325 / PS 47).